The sequence spans 224 residues: Cytidylate kinase (224 aa).

Gly11 to Thr19 is an ATP binding site.

Belongs to the cytidylate kinase family. Type 1 subfamily.

The protein localises to the cytoplasm. The enzyme catalyses CMP + ATP = CDP + ADP. The catalysed reaction is dCMP + ATP = dCDP + ADP. In Listeria monocytogenes serotype 4b (strain CLIP80459), this protein is Cytidylate kinase.